The sequence spans 390 residues: Oxygen-dependent coproporphyrinogen-III oxidase (390 aa).

The segment at 131 to 140 (VLQDGDVFEK) is important for dimerization. S181 lines the substrate pocket. H195 acts as the Proton donor in catalysis. Residues 197–199 (NYR) and 348–353 (GARYES) each bind substrate. An important for dimerization region spans residues 329-365 (YVEFNLIYDRGTKFGLYTPGARYESILMSLPLHARWE).

Belongs to the aerobic coproporphyrinogen-III oxidase family. As to quaternary structure, homodimer.

It carries out the reaction coproporphyrinogen III + O2 + 2 H(+) = protoporphyrinogen IX + 2 CO2 + 2 H2O. The protein operates within porphyrin-containing compound metabolism; protoporphyrin-IX biosynthesis; protoporphyrinogen-IX from coproporphyrinogen-III (O2 route): step 1/1. Involved in the heme biosynthesis. Catalyzes the aerobic oxidative decarboxylation of propionate groups of rings A and B of coproporphyrinogen-III to yield the vinyl groups in protoporphyrinogen-IX. This is Oxygen-dependent coproporphyrinogen-III oxidase (Coprox) from Drosophila melanogaster (Fruit fly).